Consider the following 168-residue polypeptide: Mitochondrial inner membrane protein Mpv17 (168 aa).

Transmembrane regions (helical) follow at residues 12-29 (INVA…QFFF), 41-61 (RTLR…RRWY), 82-101 (MLVD…SFLV), and 144-166 (LGYQ…SMIL).

It belongs to the peroxisomal membrane protein PXMP2/4 family. In terms of assembly, part of a larger complex that may be a homohexamer.

It localises to the mitochondrion inner membrane. Its function is as follows. Non-selective channel that modulates the membrane potential under normal conditions and oxidative stress, and is involved in mitochondrial homeostasis. Can translocate uridine, but not orotate, across a lipid membrane. Involved in maintenance of mitochondrial ultrastructure. May be involved in mitochondrial DNA (mtDNA) maintenance but does not appear to be directly involved in mitochondrial deoxynucleoside triphosphate (dNTP) pool homeostasis. May be involved in the regulation of reactive oxygen species metabolism and the control of oxidative phosphorylation. The protein is Mitochondrial inner membrane protein Mpv17 of Drosophila melanogaster (Fruit fly).